The following is a 180-amino-acid chain: Type IV major pilin protein PilE1 (180 aa).

The propeptide occupies 1–7 (MNTLQKG). Phenylalanine 8 carries the post-translational modification N-methylphenylalanine. The chain crosses the membrane as a helical span at residues 8–28 (FTLIELMIVIAIVGILAAVAL). An O-linked (GlcNAc...) serine glycan is attached at serine 70. An intrachain disulfide couples cysteine 128 to cysteine 160.

It belongs to the N-Me-Phe pilin family. As to quaternary structure, the pili are polar flexible filaments of about 5.4 nanometers diameter and 2.5 micrometers average length; they consist of only a single polypeptide chain arranged in a helical configuration of five subunits per turn in the assembled pilus.

The protein resides in the fimbrium. It is found in the membrane. In terms of biological role, major component of the type IV pilus (T4P) that plays a role in cellular adherence, microcolony formation, resistance to neutrophil mediated killing, twitching motility as well as transformation. Mediates the attachment and the formation of bacterial microcolonies on host epithelial cells. Mechanistically, pili retractation induces host NF-kappa-B activation in infected cells, which is temporally associated with the formation of gonococcal microcolonies. This is Type IV major pilin protein PilE1 (pilE1) from Neisseria gonorrhoeae.